We begin with the raw amino-acid sequence, 200 residues long: Ribosomal RNA large subunit methyltransferase E (200 aa).

Residues Gly-51, Trp-53, Asp-71, Asp-90, and Asp-112 each coordinate S-adenosyl-L-methionine. Lys-151 functions as the Proton acceptor in the catalytic mechanism.

This sequence belongs to the class I-like SAM-binding methyltransferase superfamily. RNA methyltransferase RlmE family.

It localises to the cytoplasm. It carries out the reaction uridine(2552) in 23S rRNA + S-adenosyl-L-methionine = 2'-O-methyluridine(2552) in 23S rRNA + S-adenosyl-L-homocysteine + H(+). Specifically methylates the uridine in position 2552 of 23S rRNA at the 2'-O position of the ribose in the fully assembled 50S ribosomal subunit. This is Ribosomal RNA large subunit methyltransferase E from Treponema pallidum (strain Nichols).